Reading from the N-terminus, the 574-residue chain is Splicing factor U2af large subunit A (574 aa).

The interval 1–180 (MAEHEEQPYE…SKRVSGFDQG (180 aa)) is disordered. A compositionally biased stretch (low complexity) spans 18–41 (PAPASAYAEYPAPEGSPPAAAAKP). The segment covering 53–143 (RSQHETQPHD…ERRRDRDRDG (91 aa)) has biased composition (basic and acidic residues). A compositionally biased stretch (basic residues) spans 144-172 (HRRHRSRSRSPSKGRDRRSRSRSRSRSSK). 3 consecutive RRM domains span residues 238–321 (RRVY…RPTD), 358–436 (DRIF…RANQ), and 479–565 (QVVS…YPED).

The protein belongs to the splicing factor SR family.

The protein localises to the nucleus. Its function is as follows. Necessary for the splicing of pre-mRNA. The chain is Splicing factor U2af large subunit A (U2AF65A) from Oryza sativa subsp. japonica (Rice).